We begin with the raw amino-acid sequence, 129 residues long: Small ribosomal subunit protein uS8 (129 aa).

The protein belongs to the universal ribosomal protein uS8 family. As to quaternary structure, part of the 30S ribosomal subunit. Contacts proteins S5 and S12.

Its function is as follows. One of the primary rRNA binding proteins, it binds directly to 16S rRNA central domain where it helps coordinate assembly of the platform of the 30S subunit. The sequence is that of Small ribosomal subunit protein uS8 from Dichelobacter nodosus (strain VCS1703A).